Reading from the N-terminus, the 465-residue chain is Ribulose bisphosphate carboxylase large chain (465 aa).

Lys-4 is subject to N6,N6,N6-trimethyllysine. Residues Asn-113 and Thr-163 each coordinate substrate. Catalysis depends on Lys-165, which acts as the Proton acceptor. Position 167 (Lys-167) interacts with substrate. Lys-191, Asp-193, and Glu-194 together coordinate Mg(2+). Residue Lys-191 is modified to N6-carboxylysine. His-284 (proton acceptor) is an active-site residue. The substrate site is built by Arg-285, His-317, and Ser-369.

This sequence belongs to the RuBisCO large chain family. Type I subfamily. As to quaternary structure, heterohexadecamer of 8 large chains and 8 small chains; disulfide-linked. The disulfide link is formed within the large subunit homodimers. The cofactor is Mg(2+). The disulfide bond which can form in the large chain dimeric partners within the hexadecamer appears to be associated with oxidative stress and protein turnover.

The protein resides in the plastid. The protein localises to the chloroplast. It catalyses the reaction 2 (2R)-3-phosphoglycerate + 2 H(+) = D-ribulose 1,5-bisphosphate + CO2 + H2O. It carries out the reaction D-ribulose 1,5-bisphosphate + O2 = 2-phosphoglycolate + (2R)-3-phosphoglycerate + 2 H(+). Its function is as follows. RuBisCO catalyzes two reactions: the carboxylation of D-ribulose 1,5-bisphosphate, the primary event in carbon dioxide fixation, as well as the oxidative fragmentation of the pentose substrate in the photorespiration process. Both reactions occur simultaneously and in competition at the same active site. This is Ribulose bisphosphate carboxylase large chain from Cyrilla racemiflora (Swamp titi).